The sequence spans 156 residues: Small ribosomal subunit protein uS7 (156 aa).

The protein belongs to the universal ribosomal protein uS7 family. In terms of assembly, part of the 30S ribosomal subunit. Contacts proteins S9 and S11.

In terms of biological role, one of the primary rRNA binding proteins, it binds directly to 16S rRNA where it nucleates assembly of the head domain of the 30S subunit. Is located at the subunit interface close to the decoding center, probably blocks exit of the E-site tRNA. The chain is Small ribosomal subunit protein uS7 from Streptococcus pyogenes serotype M12 (strain MGAS2096).